The primary structure comprises 231 residues: MAKLTKRQKAIAEKVVAGKQYSFEEAAKLLAELSTIKFKESVDVAVNLGVDPRKSDQVVRGATVLPNGTGKSVRVAVFTQGPAAEAALAAGADKVGMDELAAEMKGGDLNYDVVIASPDAMRVVGQLGQILGPRGLMPNPKVGTVTPDVATAVKNAKAGQVRFRTDKNGIIHSSVGKVDFEPAKLQQNVEALLADLKRLKPSSSKGVYVKRVTLSTTMGPGLQIDLASLEA.

This sequence belongs to the universal ribosomal protein uL1 family. Part of the 50S ribosomal subunit.

Its function is as follows. Binds directly to 23S rRNA. The L1 stalk is quite mobile in the ribosome, and is involved in E site tRNA release. Protein L1 is also a translational repressor protein, it controls the translation of the L11 operon by binding to its mRNA. This is Large ribosomal subunit protein uL1 from Pseudomonas aeruginosa (strain LESB58).